A 428-amino-acid polypeptide reads, in one-letter code: Metal tolerance protein 10 (428 aa).

Residues Met-1–Arg-140 are Cytoplasmic-facing. The helical transmembrane segment at Leu-141–Ser-161 threads the bilayer. Over Met-162–Met-167 the chain is Vacuolar. The helical transmembrane segment at Ala-168 to Phe-188 threads the bilayer. Over Thr-189–Gln-209 the chain is Cytoplasmic. A helical transmembrane segment spans residues Pro-210–Glu-230. Residues Ser-231–Glu-248 lie on the Vacuolar side of the membrane. Residues Lys-249 to Cys-269 form a helical membrane-spanning segment. At Arg-270–Asp-287 the chain is on the cytoplasmic side. A helical transmembrane segment spans residues Val-288–Ile-308. Residues Asp-309–Thr-311 lie on the Vacuolar side of the membrane. A helical transmembrane segment spans residues Gly-312–Val-332. Residues His-333 to Asn-428 lie on the Cytoplasmic side of the membrane.

It belongs to the cation diffusion facilitator (CDF) transporter (TC 2.A.4) family. SLC30A subfamily.

It localises to the vacuole membrane. Its function is as follows. Involved in sequestration of excess metal in the cytoplasm into vacuoles to maintain metal homeostasis. In Arabidopsis thaliana (Mouse-ear cress), this protein is Metal tolerance protein 10 (MTP10).